Here is a 508-residue protein sequence, read N- to C-terminus: Arabinose import ATP-binding protein AraG (508 aa).

2 ABC transporter domains span residues 5–240 (LEFQ…MVGR) and 250–496 (ARTL…LPDA). Position 37-44 (37-44 (GENGAGKS)) interacts with ATP.

Belongs to the ABC transporter superfamily. Arabinose importer (TC 3.A.1.2.2) family. The complex is composed of two ATP-binding proteins (AraG), two transmembrane proteins (AraH) and a solute-binding protein (AraF).

The protein localises to the cell inner membrane. It carries out the reaction L-arabinose(out) + ATP + H2O = L-arabinose(in) + ADP + phosphate + H(+). Part of the ABC transporter complex AraFGH involved in arabinose import. Responsible for energy coupling to the transport system. The protein is Arabinose import ATP-binding protein AraG of Rhizobium meliloti (strain 1021) (Ensifer meliloti).